A 115-amino-acid chain; its full sequence is Holo-[acyl-carrier-protein] synthase (115 aa).

Mg(2+)-binding residues include Asp-8 and Glu-50.

It belongs to the P-Pant transferase superfamily. AcpS family. It depends on Mg(2+) as a cofactor.

It is found in the cytoplasm. The enzyme catalyses apo-[ACP] + CoA = holo-[ACP] + adenosine 3',5'-bisphosphate + H(+). Functionally, transfers the 4'-phosphopantetheine moiety from coenzyme A to a Ser of acyl-carrier-protein. The chain is Holo-[acyl-carrier-protein] synthase from Arthrobacter sp. (strain FB24).